Consider the following 396-residue polypeptide: Probable sugar efflux transporter (396 aa).

Transmembrane regions (helical) follow at residues 15–35 (VVTL…PVGL), 50–70 (VGIM…PFML), 81–101 (LICL…AWNF), 103–123 (VLVI…SITA), 136–156 (AQAL…GLPI), 169–189 (TFFA…KLLP), 209–229 (PALM…YTAY), 246–266 (FATV…LVFG), 275–295 (SLVS…LPAA), 301–321 (LAIL…GMQV), 333–353 (VAMA…ALVG), and 364–384 (AIGY…VLIF).

The protein belongs to the major facilitator superfamily. SotB (TC 2.A.1.2) family.

Its subcellular location is the cell inner membrane. Its function is as follows. Involved in the efflux of sugars. The physiological role may be the reduction of the intracellular concentration of toxic sugars or sugar metabolites. The protein is Probable sugar efflux transporter of Salmonella paratyphi C (strain RKS4594).